The primary structure comprises 279 residues: Movement protein (279 aa).

A disordered region spans residues 247–279 (ESEELNVESPPAAIGSSSASRSEAFRPQVVNGL). Low complexity predominate over residues 254 to 268 (ESPPAAIGSSSASRS).

Belongs to the cucumovirus movement protein family.

It localises to the host cell junction. It is found in the host plasmodesma. Transports viral genome to neighboring plant cells directly through plasmosdesmata, without any budding. The movement protein allows efficient cell to cell propagation, by bypassing the host cell wall barrier. Acts by forming a tubular structure at the host plasmodesmata, enlarging it enough to allow free passage of virion capsids. In Cucumis sativus (Cucumber), this protein is Movement protein.